Here is a 414-residue protein sequence, read N- to C-terminus: Ornithine aminotransferase (414 aa).

A disulfide bond links C154 and C163. K262 is subject to N6-(pyridoxal phosphate)lysine.

It belongs to the class-III pyridoxal-phosphate-dependent aminotransferase family. In terms of assembly, homodimer. Requires pyridoxal 5'-phosphate as cofactor. In terms of processing, the disulfide bond between Cys-154 and Cys-163 is reduced by TRX1 which increases OAT catalytic activity.

The protein localises to the cytoplasm. The catalysed reaction is a 2-oxocarboxylate + L-ornithine = L-glutamate 5-semialdehyde + an L-alpha-amino acid. The enzyme catalyses L-ornithine + 2-oxoglutarate = L-glutamate 5-semialdehyde + L-glutamate. It functions in the pathway amino-acid biosynthesis; L-proline biosynthesis; L-glutamate 5-semialdehyde from L-ornithine: step 1/1. Unlike for mammalian OATs, activity is increased by TRX1-mediated reduction of the disulfide bond between Cys-154 and Cys-163. Binding to TRX1 may also induce conformational changes that facilitate substrate binding. Its function is as follows. The enzyme has a very narrow substrate specificity and can only catalyze the transamination of alpha-ketoglutarate with ornithine or N-acetylornithine and, to a lesser extent, of glutamate-5-semialdehyde with glutamate and alanine. The protein is Ornithine aminotransferase of Plasmodium falciparum (isolate 3D7).